The following is a 1069-amino-acid chain: Carbamoyl phosphate synthase large chain (1069 aa).

The interval 1 to 401 (MPLNKDIKRV…AFLKGIRSLE (401 aa)) is carboxyphosphate synthetic domain. ATP contacts are provided by Arg129, Arg169, Gly175, Gly176, Lys208, Val210, Glu215, Gly241, Ile242, His243, Gln284, and Glu298. The 195-residue stretch at 133–327 (RDMMNRIGEP…IAKLAAKIAL (195 aa)) folds into the ATP-grasp 1 domain. Residues Gln284, Glu298, and Asn300 each coordinate Mg(2+). Mn(2+) contacts are provided by Gln284, Glu298, and Asn300. The interval 402–549 (IGKYSLDHKK…YSTYEQYDEV (148 aa)) is oligomerization domain. The segment at 550–932 (EVSNRRKVIV…ALYKGFVGAN (383 aa)) is carbamoyl phosphate synthetic domain. The ATP-grasp 2 domain maps to 674 to 864 (DELLERLDIS…IVDIATQVML (191 aa)). Residues Arg710, Lys749, Leu751, Glu755, Gly780, Val781, His782, Ser783, Gln823, and Glu835 each contribute to the ATP site. Mg(2+) contacts are provided by Gln823, Glu835, and Asn837. Mn(2+) contacts are provided by Gln823, Glu835, and Asn837. One can recognise an MGS-like domain in the interval 932–1069 (NMYPSKEKGK…KDLEVFDITK (138 aa)). Residues 933 to 1069 (MYPSKEKGKI…KDLEVFDITK (137 aa)) form an allosteric domain region.

Belongs to the CarB family. Composed of two chains; the small (or glutamine) chain promotes the hydrolysis of glutamine to ammonia, which is used by the large (or ammonia) chain to synthesize carbamoyl phosphate. Tetramer of heterodimers (alpha,beta)4. It depends on Mg(2+) as a cofactor. Requires Mn(2+) as cofactor.

It carries out the reaction hydrogencarbonate + L-glutamine + 2 ATP + H2O = carbamoyl phosphate + L-glutamate + 2 ADP + phosphate + 2 H(+). The catalysed reaction is hydrogencarbonate + NH4(+) + 2 ATP = carbamoyl phosphate + 2 ADP + phosphate + 2 H(+). It participates in amino-acid biosynthesis; L-arginine biosynthesis; carbamoyl phosphate from bicarbonate: step 1/1. The protein operates within pyrimidine metabolism; UMP biosynthesis via de novo pathway; (S)-dihydroorotate from bicarbonate: step 1/3. Large subunit of the glutamine-dependent carbamoyl phosphate synthetase (CPSase). CPSase catalyzes the formation of carbamoyl phosphate from the ammonia moiety of glutamine, carbonate, and phosphate donated by ATP, constituting the first step of 2 biosynthetic pathways, one leading to arginine and/or urea and the other to pyrimidine nucleotides. The large subunit (synthetase) binds the substrates ammonia (free or transferred from glutamine from the small subunit), hydrogencarbonate and ATP and carries out an ATP-coupled ligase reaction, activating hydrogencarbonate by forming carboxy phosphate which reacts with ammonia to form carbamoyl phosphate. This is Carbamoyl phosphate synthase large chain from Clostridium botulinum (strain Alaska E43 / Type E3).